A 333-amino-acid chain; its full sequence is UDP-3-O-acylglucosamine N-acyltransferase 2 (333 aa).

The active-site Proton acceptor is the His-243.

It belongs to the transferase hexapeptide repeat family. LpxD subfamily. As to quaternary structure, homotrimer.

It catalyses the reaction a UDP-3-O-[(3R)-3-hydroxyacyl]-alpha-D-glucosamine + a (3R)-hydroxyacyl-[ACP] = a UDP-2-N,3-O-bis[(3R)-3-hydroxyacyl]-alpha-D-glucosamine + holo-[ACP] + H(+). Its pathway is bacterial outer membrane biogenesis; LPS lipid A biosynthesis. Functionally, catalyzes the N-acylation of UDP-3-O-acylglucosamine using 3-hydroxyacyl-ACP as the acyl donor. Is involved in the biosynthesis of lipid A, a phosphorylated glycolipid that anchors the lipopolysaccharide to the outer membrane of the cell. The protein is UDP-3-O-acylglucosamine N-acyltransferase 2 of Koribacter versatilis (strain Ellin345).